The following is a 119-amino-acid chain: Fluoride-specific ion channel FluC 1 (119 aa).

4 helical membrane-spanning segments follow: residues 2 to 22 (TGAV…GAVL), 37 to 57 (AGTL…TFAA), 62 to 82 (TMLL…SFSV), and 99 to 119 (HALG…LLVA). Glycine 72 and threonine 75 together coordinate Na(+).

The protein belongs to the fluoride channel Fluc/FEX (TC 1.A.43) family.

The protein resides in the cell membrane. The catalysed reaction is fluoride(in) = fluoride(out). With respect to regulation, na(+) is not transported, but it plays an essential structural role and its presence is essential for fluoride channel function. Fluoride-specific ion channel. Important for reducing fluoride concentration in the cell, thus reducing its toxicity. The chain is Fluoride-specific ion channel FluC 1 from Halobacterium salinarum (strain ATCC 700922 / JCM 11081 / NRC-1) (Halobacterium halobium).